We begin with the raw amino-acid sequence, 838 residues long: V-type proton ATPase 116 kDa subunit a 1 (838 aa).

Over 1-388 (MGELFRSEEM…DAYGIGTYRE (388 aa)) the chain is Cytoplasmic. The helical transmembrane segment at 389–407 (INPAPYTIITFPFLFAVMF) threads the bilayer. Residues 408–409 (GD) are Vacuolar-facing. A helical transmembrane segment spans residues 410–426 (FGHGILMTLIAIWMVLR). Over 427–441 (ESRILSQKSDNEMFS) the chain is Cytoplasmic. Residues 442 to 471 (TVFSGRYIILLMGLFSTYTGLIYNDCFSKS) form a helical membrane-spanning segment. Residues 472–535 (LNMFGSSWSV…ANNKLAFLNS (64 aa)) lie on the Vacuolar side of the membrane. Residues 536–555 (FKMKMSVILGIIHMLFGVML) traverse the membrane as a helical segment. The Cytoplasmic segment spans residues 556–573 (SLLNHIYFKKPLNIYLGF). A helical membrane pass occupies residues 574 to 594 (IPEMIFMSSLFGYLVILIFYK). The Vacuolar segment spans residues 595–639 (WTAYDAHTSKEAPSPLIHFINMFLFSYGDTSNKMLYRGQKGIQCF). The chain crosses the membrane as a helical span at residues 640 to 659 (LVVVALLCVPWMLVAKPLVL). Over 660 to 725 (RHQYLRRKHL…DTVVYQAIHT (66 aa)) the chain is Cytoplasmic. The chain crosses the membrane as a helical span at residues 726 to 750 (IEYCLGCISNTASYLRLWALSLAHA). Residues 751-771 (QLSEVLWTMVIHTGLSVRSLA) lie on the Vacuolar side of the membrane. Residues 772–810 (GGFGLVFIFAAFATLTVAILLVMEGLSAFLHALRLHWIE) traverse the membrane as a helical segment. Topologically, residues 811–838 (FQNKFYTGTGFKFLPFSFDPIREGKFDD) are cytoplasmic.

The protein belongs to the V-ATPase 116 kDa subunit family. In terms of assembly, V-ATPase is a heteromultimeric enzyme made up of two complexes: the ATP-hydrolytic V1 complex and the proton translocation V0 complex. The V1 complex consists of three catalytic AB heterodimers that form a heterohexamer, three peripheral stalks each consisting of EG heterodimers, one central rotor including subunits D and F, and the regulatory subunits C and H. The proton translocation complex V0 consists of the proton transport subunit a, a ring of proteolipid subunits c9c'', rotary subunit d, subunits e and f, and two accessory subunits. In terms of tissue distribution, detected in brain (at protein level). Highest expression in brain, intermediate levels in kidney, and relatively low levels in bone and liver.

It localises to the cytoplasmic vesicle. It is found in the clathrin-coated vesicle membrane. The protein localises to the secretory vesicle. The protein resides in the synaptic vesicle membrane. Its subcellular location is the melanosome. Functionally, subunit of the V0 complex of vacuolar(H+)-ATPase (V-ATPase), a multisubunit enzyme composed of a peripheral complex (V1) that hydrolyzes ATP and a membrane integral complex (V0) that translocates protons. V-ATPase is responsible for acidifying and maintaining the pH of intracellular compartments and in some cell types, is targeted to the plasma membrane, where it is responsible for acidifying the extracellular environment. Required for assembly and activity of the vacuolar ATPase. This Gallus gallus (Chicken) protein is V-type proton ATPase 116 kDa subunit a 1 (ATP6V0A1).